Here is an 89-residue protein sequence, read N- to C-terminus: Large ribosomal subunit protein eL34 (89 aa).

The interval 1 to 32 (MPAPRFKSGSFKKISKRGPGNKTLTHHRRSKV) is disordered.

This sequence belongs to the eukaryotic ribosomal protein eL34 family.

The chain is Large ribosomal subunit protein eL34 from Methanococcus aeolicus (strain ATCC BAA-1280 / DSM 17508 / OCM 812 / Nankai-3).